The sequence spans 301 residues: Tyrosine recombinase XerC (301 aa).

A Core-binding (CB) domain is found at 1–89; that stretch reads MGLDGLAAYL…SWRQYCVWLV (89 aa). One can recognise a Tyr recombinase domain in the interval 110–290; that stretch reads RVPKALPQEW…DFDHIARLYD (181 aa). Residues R151, K175, H242, R245, and H268 contribute to the active site. Catalysis depends on Y277, which acts as the O-(3'-phospho-DNA)-tyrosine intermediate.

Belongs to the 'phage' integrase family. XerC subfamily. In terms of assembly, forms a cyclic heterotetrameric complex composed of two molecules of XerC and two molecules of XerD.

The protein localises to the cytoplasm. Functionally, site-specific tyrosine recombinase, which acts by catalyzing the cutting and rejoining of the recombining DNA molecules. The XerC-XerD complex is essential to convert dimers of the bacterial chromosome into monomers to permit their segregation at cell division. It also contributes to the segregational stability of plasmids. The polypeptide is Tyrosine recombinase XerC (Neisseria meningitidis serogroup B (strain ATCC BAA-335 / MC58)).